The following is a 1146-amino-acid chain: Large proline-rich protein BAG6 (1146 aa).

Position 1 is an N-acetylmethionine (Met-1). Positions 17-92 constitute a Ubiquitin-like domain; sequence LEVLVKTLDS…HLVERAPPQT (76 aa). Disordered stretches follow at residues 87-128, 186-268, 381-436, 457-525, and 555-618; these read RAPP…HDRN, RGGT…HPSP, TMTG…TSHP, QDSG…QGAG, and PGMA…SAAD. Ser-96 is modified (phosphoserine). A compositionally biased stretch (low complexity) spans 96-108; sequence SGASSGTGSASAT. Positions 109–122 are enriched in gly residues; sequence HGGGPLPGTRGPGA. Thr-117 bears the Phosphothreonine mark. Residues 208–217 show a composition bias toward polar residues; it reads VALNSQTSEP. 2 tandem repeats follow at residues 236-265 and 410-438. The interval 236–650 is 4 X 29 AA approximate repeats; that stretch reads RPPTQTPELP…LASPTITVAV (415 aa). Residues 239–257 show a composition bias toward pro residues; the sequence is TQTPELPPSGPAPAGPAPA. A compositionally biased stretch (low complexity) spans 394–413; sequence GAEAASPGSGQASSLPPSSA. Pro residues-rich tracts occupy residues 422–433 and 502–515; these read APPPGPAPPPAT and PTPP…PGGP. Composition is skewed to low complexity over residues 555–573 and 583–601; these read PGMA…AQAP and PATA…TAGP. 2 tandem repeats follow at residues 589–616 and 622–650. Residues 603–614 show a composition bias toward pro residues; the sequence is PGGPAQPPPPQP. Disordered regions lie at residues 666–711 and 961–1146; these read ASQA…ESLP and PQAL…ADDP. Pro residues predominate over residues 670–694; sequence APPPPPPPPPPPPAPEQQTTPPPGS. The span at 977–986 shows a compositional bias: basic and acidic residues; that stretch reads TSPEPQREDA. Ser-978 and Ser-987 each carry phosphoserine. The segment covering 1021-1034 has biased composition (low complexity); sequence AEPWAAAVPPEWVP. Residues 1024–1054 form a required for interaction with GET4 region; that stretch reads WAAAVPPEWVPIIQQDIQSQRKVKPQPPLSD. A Nuclear localization site motif is present at residues 1026–1068; it reads AAVPPEWVPIIQQDIQSQRKVKPQPPLSDAYLSGMPAKRRKTM. The sufficient for the delivery of client proteins to the endoplasmic reticulum stretch occupies residues 1036-1146; the sequence is IQQDIQSQRK…NAHRAFADDP (111 aa). A Phosphothreonine modification is found at Thr-1067. Positions 1072–1129 are BAG-similar domain, required and sufficient for interaction with UBL4A; the sequence is GPQLLLSEAVSRAAKAAGARPLTSPESLSRDLEAPEVQESYRQQLRSDIQKRLQEDPN. Positions 1080-1090 are enriched in low complexity; the sequence is AVSRAAKAAGA. Phosphoserine occurs at positions 1095 and 1131.

As to quaternary structure, component of the BAG6/BAT3 complex, also named BAT3 complex, at least composed of BAG6, UBL4A and GET4/TRC35. Interacts with GET4; the interaction is direct and localizes BAG6 in the cytosol. Interacts with UBL4A; the interaction is direct and required for UBL4A protein stability. Interacts with AIFM1. Interacts with HSPA2. Interacts with CTCFL. Interacts with p300/EP300. Interacts (via ubiquitin-like domain) with RNF126; required for BAG6-dependent ubiquitination of proteins mislocalized to the cytosol. Interacts (via ubiquitin-like domain) with SGTA; SGTA competes with RNF126 by binding the same region of BAG6, thereby promoting deubiquitination of BAG6-target proteins and rescuing them from degradation. Interacts with ricin A chain. Interacts with VCP and AMFR; both form the VCP/p97-AMFR/gp78 complex. Interacts with SYVN1. Interacts with USP13; the interaction is direct and may mediate UBL4A deubiquitination. Interacts with ZFAND2B. Interacts with KPNA2. Interacts with UBQLN4. Post-translationally, ricin can induce a cleavage by the caspase CASP3. The released C-terminal peptide induces apoptosis.

The protein localises to the cytoplasm. It localises to the cytosol. The protein resides in the nucleus. It is found in the secreted. Its subcellular location is the extracellular exosome. Functionally, ATP-independent molecular chaperone preventing the aggregation of misfolded and hydrophobic patches-containing proteins. Functions as part of a cytosolic protein quality control complex, the BAG6/BAT3 complex, which maintains these client proteins in a soluble state and participates in their proper delivery to the endoplasmic reticulum or alternatively can promote their sorting to the proteasome where they undergo degradation. The BAG6/BAT3 complex is involved in the post-translational delivery of tail-anchored/type II transmembrane proteins to the endoplasmic reticulum membrane. Recruited to ribosomes, it interacts with the transmembrane region of newly synthesized tail-anchored proteins and together with SGTA and ASNA1 mediates their delivery to the endoplasmic reticulum. Client proteins that cannot be properly delivered to the endoplasmic reticulum are ubiquitinated by RNF126, an E3 ubiquitin-protein ligase associated with BAG6 and are sorted to the proteasome. SGTA which prevents the recruitment of RNF126 to BAG6 may negatively regulate the ubiquitination and the proteasomal degradation of client proteins. Similarly, the BAG6/BAT3 complex also functions as a sorting platform for proteins of the secretory pathway that are mislocalized to the cytosol either delivering them to the proteasome for degradation or to the endoplasmic reticulum. The BAG6/BAT3 complex also plays a role in the endoplasmic reticulum-associated degradation (ERAD), a quality control mechanism that eliminates unwanted proteins of the endoplasmic reticulum through their retrotranslocation to the cytosol and their targeting to the proteasome. It maintains these retrotranslocated proteins in an unfolded yet soluble state condition in the cytosol to ensure their proper delivery to the proteasome. BAG6 is also required for selective ubiquitin-mediated degradation of defective nascent chain polypeptides by the proteasome. In this context, it may participate in the production of antigenic peptides and play a role in antigen presentation in immune response. BAG6 is also involved in endoplasmic reticulum stress-induced pre-emptive quality control, a mechanism that selectively attenuates the translocation of newly synthesized proteins into the endoplasmic reticulum and reroutes them to the cytosol for proteasomal degradation. BAG6 may ensure the proper degradation of these proteins and thereby protects the endoplasmic reticulum from protein overload upon stress. By inhibiting the polyubiquitination and subsequent proteasomal degradation of HSPA2 it may also play a role in the assembly of the synaptonemal complex during spermatogenesis. Also positively regulates apoptosis by interacting with and stabilizing the proapoptotic factor AIFM1. By controlling the steady-state expression of the IGF1R receptor, indirectly regulates the insulin-like growth factor receptor signaling pathway. Involved in DNA damage-induced apoptosis: following DNA damage, accumulates in the nucleus and forms a complex with p300/EP300, enhancing p300/EP300-mediated p53/TP53 acetylation leading to increase p53/TP53 transcriptional activity. When nuclear, may also act as a component of some chromatin regulator complex that regulates histone 3 'Lys-4' dimethylation (H3K4me2). In terms of biological role, released extracellularly via exosomes, it is a ligand of the natural killer/NK cells receptor NCR3 and stimulates NK cells cytotoxicity. It may thereby trigger NK cells cytotoxicity against neighboring tumor cells and immature myeloid dendritic cells (DC). Its function is as follows. May mediate ricin-induced apoptosis. This is Large proline-rich protein BAG6 from Rattus norvegicus (Rat).